Consider the following 780-residue polypeptide: Pendrin (780 aa).

The Cytoplasmic segment spans residues 1-87 (MAARDRRSEP…YRVKEWLLSD (87 aa)). A helical transmembrane segment spans residues 88–108 (IISGVSTGLVGTLQGMAYALL). Ala109 is a topological domain (extracellular). A helical membrane pass occupies residues 110–130 (AVPVQYGLYSAFFPILTYFVF). At 131 to 135 (GTSRH) the chain is on the cytoplasmic side. Residues 136-156 (ISVGPFPVVSLMVGSVVLSMA) traverse the membrane as a helical segment. Residues 157 to 191 (PDDHFLVPSGNGSTLNTTTLDTGTRDAARVLLAST) lie on the Extracellular side of the membrane. A helical transmembrane segment spans residues 192 to 212 (LTLLVGIIQLVFGGLQIGFIV). Topologically, residues 213–218 (RYLADP) are cytoplasmic. The helical transmembrane segment at 219–239 (LVGGFTTAAAFQVLVSQLKIV) threads the bilayer. Residues 240–263 (LNVSTKNYNGVLSIIYTLIEIFQN) lie on the Extracellular side of the membrane. A helical transmembrane segment spans residues 264 to 284 (IGDTNIADFIAGLLTIIVCMA). Residues 285-295 (VKELNDRFKHK) are Cytoplasmic-facing. The chain crosses the membrane as a helical span at residues 296-316 (IPVPIPIEVIVTIIATAISYG). Residues 317–344 (ANLEANYNAGIVKSIPSGFLPPVLPSVG) are Extracellular-facing. A helical transmembrane segment spans residues 345 to 365 (LFSDMLAASFSIAVVAYAIAV). Over 366–384 (SVGKVYATKHDYIIDGNQE) the chain is Cytoplasmic. Residues 385 to 405 (FIAFGISNVFSGFFSCFVATT) traverse the membrane as a helical segment. Topologically, residues 406-421 (ALSRTAVQESTGGKTQ) are extracellular. A helical transmembrane segment spans residues 422-442 (VAGLISAVIVMVAIVALGKLL). Over 443–448 (EPLQKS) the chain is Cytoplasmic. Residues 449–469 (VLAAVVIANLKGMFMQVCDVP) form a helical membrane-spanning segment. Residues 470–486 (RLWKQNKTDAVIWVFTC) are Extracellular-facing. The chain crosses the membrane as a helical span at residues 487–507 (IMSIILGLDLGLLAGLLFGLL). The Cytoplasmic segment spans residues 508–780 (TVVLRVQFPS…QDEAMRRLAS (273 aa)). Positions 535–729 (HYKNLEEPEG…LTVHDAILYL (195 aa)) constitute an STAS domain.

Belongs to the SLC26A/SulP transporter (TC 2.A.53) family. Highly expressed in the kidney (at protein level).

Its subcellular location is the cell membrane. The protein resides in the apical cell membrane. The enzyme catalyses chloride(in) = chloride(out). It carries out the reaction iodide(out) = iodide(in). The catalysed reaction is hydrogencarbonate(in) + chloride(out) = hydrogencarbonate(out) + chloride(in). It catalyses the reaction iodide(in) + hydrogencarbonate(out) = iodide(out) + hydrogencarbonate(in). The enzyme catalyses iodide(in) + chloride(out) = iodide(out) + chloride(in). It carries out the reaction formate(in) + chloride(out) = formate(out) + chloride(in). Its function is as follows. Sodium-independent transporter of chloride and iodide. Mediates electroneutral chloride-bicarbonate and chloride-formate exchange with 1:1 stoichiometry. Mediates electroneutral iodide-chloride and iodide-bicarbonate exchange. The sequence is that of Pendrin (Slc26a4) from Rattus norvegicus (Rat).